The primary structure comprises 81 residues: RNA-binding protein Hfq (81 aa).

A Sm domain is found at Asp10–Val69.

The protein belongs to the Hfq family. Homohexamer.

RNA chaperone that binds small regulatory RNA (sRNAs) and mRNAs to facilitate mRNA translational regulation in response to envelope stress, environmental stress and changes in metabolite concentrations. Also binds with high specificity to tRNAs. This is RNA-binding protein Hfq from Methylobacillus flagellatus (strain ATCC 51484 / DSM 6875 / VKM B-1610 / KT).